The primary structure comprises 601 residues: DnaJ-like protein MG200 (601 aa).

The region spanning 5-77 is the J domain; it reads KRDYYEVLGI…DKYGFDGVDG (73 aa). Disordered regions lie at residues 143–163 and 205–272; these read VQQNQNQNKDPDELRSKVPGE and VDSE…EPIP. Basic and acidic residues predominate over residues 151 to 160; that stretch reads KDPDELRSKV. A compositionally biased stretch (pro residues) spans 263–272; it reads EPTPIPEPIP.

This Mycoplasma genitalium (strain ATCC 33530 / DSM 19775 / NCTC 10195 / G37) (Mycoplasmoides genitalium) protein is DnaJ-like protein MG200.